The primary structure comprises 125 residues: MPTINQLVRQGREVEKIKSKSPAMENSPQRRGVCTRVYTTTPKKPNSALRKVAKVRLTNGSEVISYIGGEGHNLQEHSVVLVRGGRVKDLPGVRYHIVRGSLDLQGVKDRKQARSKYGAKKPKAK.

A disordered region spans residues Arg9–Arg31. Asp89 is modified (3-methylthioaspartic acid).

The protein belongs to the universal ribosomal protein uS12 family. As to quaternary structure, part of the 30S ribosomal subunit. Contacts proteins S8 and S17. May interact with IF1 in the 30S initiation complex.

With S4 and S5 plays an important role in translational accuracy. Its function is as follows. Interacts with and stabilizes bases of the 16S rRNA that are involved in tRNA selection in the A site and with the mRNA backbone. Located at the interface of the 30S and 50S subunits, it traverses the body of the 30S subunit contacting proteins on the other side and probably holding the rRNA structure together. The combined cluster of proteins S8, S12 and S17 appears to hold together the shoulder and platform of the 30S subunit. The polypeptide is Small ribosomal subunit protein uS12 (Verminephrobacter eiseniae (strain EF01-2)).